Consider the following 365-residue polypeptide: Class I histocompatibility antigen, Gogo-A*0101 alpha chain (365 aa).

The first 24 residues, 1-24 (MAVMAPRTLVLLLSGALALTQTWA), serve as a signal peptide directing secretion. Residues 25-114 (GSHSMRYFST…LRGYYNQSED (90 aa)) are alpha-1. Residues 25–308 (GSHSMRYFST…EPSSQPTIPI (284 aa)) are Extracellular-facing. N110 is a glycosylation site (N-linked (GlcNAc...) asparagine). Positions 115–206 (GSHTIQRMYG…ENGKETLQRT (92 aa)) are alpha-2. 2 cysteine pairs are disulfide-bonded: C125–C188 and C227–C283. Positions 207-298 (DAPKTHMTHH…GLPEPLTLRW (92 aa)) are alpha-3. The Ig-like C1-type domain maps to 209–297 (PKTHMTHHAV…EGLPEPLTLR (89 aa)). The connecting peptide stretch occupies residues 299 to 308 (EPSSQPTIPI). The helical transmembrane segment at 309 to 332 (VGIIAGLVLFGAVIAGAVVAAVRW) threads the bilayer. The Cytoplasmic portion of the chain corresponds to 333–365 (RRKSSDRKGGSYSQAASSDSAQGSDVSLTACKV). The disordered stretch occupies residues 338 to 365 (DRKGGSYSQAASSDSAQGSDVSLTACKV). Residues 342–359 (GSYSQAASSDSAQGSDVS) are compositionally biased toward low complexity. Position 343 is a phosphoserine (S343). Y344 bears the Phosphotyrosine mark. 6 positions are modified to phosphoserine: S345, S349, S350, S352, S356, and S359.

Belongs to the MHC class I family. As to quaternary structure, heterodimer of an alpha chain and a beta chain (beta-2-microglobulin).

The protein localises to the membrane. In terms of biological role, involved in the presentation of foreign antigens to the immune system. The protein is Class I histocompatibility antigen, Gogo-A*0101 alpha chain of Gorilla gorilla gorilla (Western lowland gorilla).